The chain runs to 197 residues: GTP cyclohydrolase-2 (197 aa).

A GTP-binding site is contributed by 50–54 (RIHSE). Residues C55, C66, and C68 each contribute to the Zn(2+) site. Residues Q71, 93–95 (EGR), and T115 each bind GTP. D127 acts as the Proton acceptor in catalysis. The Nucleophile role is filled by R129. T150 and K155 together coordinate GTP.

It belongs to the GTP cyclohydrolase II family. The cofactor is Zn(2+).

It catalyses the reaction GTP + 4 H2O = 2,5-diamino-6-hydroxy-4-(5-phosphoribosylamino)-pyrimidine + formate + 2 phosphate + 3 H(+). The protein operates within cofactor biosynthesis; riboflavin biosynthesis; 5-amino-6-(D-ribitylamino)uracil from GTP: step 1/4. Functionally, catalyzes the conversion of GTP to 2,5-diamino-6-ribosylamino-4(3H)-pyrimidinone 5'-phosphate (DARP), formate and pyrophosphate. The protein is GTP cyclohydrolase-2 of Neisseria meningitidis serogroup A / serotype 4A (strain DSM 15465 / Z2491).